Consider the following 1265-residue polypeptide: Guanine nucleotide exchange factor SDC25 (1265 aa).

Residues 26–97 (QPIDVVECTY…PPSFTRSILN (72 aa)) enclose the SH3 domain. 2 disordered regions span residues 409-454 (IPAS…DTIW) and 623-648 (LNLD…DEYE). A compositionally biased stretch (low complexity) spans 416–428 (TSCSSETSHHSPS). In terms of domain architecture, N-terminal Ras-GEF spans 782–914 (SNNRIKGGSK…LLKEVNQKFK (133 aa)). Residues 952 to 1199 (DPVLFATQLT…YQLSLIIEPK (248 aa)) enclose the Ras-GEF domain. Residues 1201–1252 (RKKVVPNSNSNNKSQEKSRDDQTDEGKTSTKKDRFSKFQLHKTKKKAPKVSK) form a disordered region. Positions 1214–1236 (SQEKSRDDQTDEGKTSTKKDRFS) are enriched in basic and acidic residues. A compositionally biased stretch (basic residues) spans 1239-1252 (QLHKTKKKAPKVSK).

In terms of biological role, promotes the exchange of Ras-bound GDP by GTP. The polypeptide is Guanine nucleotide exchange factor SDC25 (SDC25) (Saccharomyces cerevisiae (strain AWRI1631) (Baker's yeast)).